An 898-amino-acid polypeptide reads, in one-letter code: Tight junction protein ZO-3 (898 aa).

Residues 11-93 (TATLCRDPRR…LANITVKRPR (83 aa)) form the PDZ 1 domain. Positions 98 to 165 (PATKAGTSGR…SPGGNSEANG (68 aa)) are disordered. 5 positions are modified to phosphoserine: Ser128, Ser156, Ser161, Ser195, and Ser313. One can recognise a PDZ 2 domain in the interval 187 to 264 (SVLVRRTESE…KLTLLVLRDR (78 aa)). The segment at 295–368 (LSQAVPSHVP…QSAEDRGYSP (74 aa)) is disordered. Residues 312–349 (RSLDSDGTDSPRDSPPLRRENSLDSRTISEPDAPRHSS) show a composition bias toward basic and acidic residues. Phosphothreonine is present on Thr319. 2 positions are modified to phosphoserine: Ser321 and Ser360. In terms of domain architecture, PDZ 3 spans 369–435 (DSRVVRFHKG…LTREEAVQFL (67 aa)). In terms of domain architecture, SH3 spans 464–538 (GDSFYIRTHF…PNQSRAEQLA (75 aa)). Positions 569 to 750 (LRRGAKKSTQ…WYQELKAVVR (182 aa)) constitute a Guanylate kinase-like domain. Ser580 carries the post-translational modification Phosphoserine. Residues 759 to 898 (TAEDQLDNSS…GYDWGPATDL (140 aa)) are disordered. Residues 762-772 (DQLDNSSEDNL) are compositionally biased toward acidic residues. A compositionally biased stretch (low complexity) spans 780 to 790 (ADSSADLSCDS). The segment covering 796–814 (YETDGEGYTDGEGYTDVDE) has biased composition (acidic residues). A compositionally biased stretch (basic and acidic residues) spans 831–841 (EEPRSPRDHGR). Phosphoserine occurs at positions 835, 884, and 885.

This sequence belongs to the MAGUK family. In terms of assembly, heterodimer with TJP1. Interacts with UBN1. Interacts with occludin OCLN and claudins. Interacts with PATJ. Interacts with FASLG. Interacts with CCND1. Post-translationally, phosphorylated.

Its subcellular location is the cell membrane. The protein resides in the cell junction. It localises to the tight junction. It is found in the nucleus. Functionally, TJP1, TJP2, and TJP3 are closely related scaffolding proteins that link tight junction (TJ) transmembrane proteins such as claudins, junctional adhesion molecules, and occludin to the actin cytoskeleton. The tight junction acts to limit movement of substances through the paracellular space and as a boundary between the compositionally distinct apical and basolateral plasma membrane domains of epithelial and endothelial cells. Binds and recruits PATJ to tight junctions where it connects and stabilizes apical and lateral components of tight junctions. Promotes cell-cycle progression through the sequestration of cyclin D1 (CCND1) at tight junctions during mitosis which prevents CCND1 degradation during M-phase and enables S-phase transition. With TJP1 and TJP2, participates in the junctional retention and stability of the transcription factor DBPA, but is not involved in its shuttling to the nucleus. Contrary to TJP2, TJP3 is dispensable for individual viability, embryonic development, epithelial differentiation, and the establishment of TJs, at least in the laboratory environment. The chain is Tight junction protein ZO-3 (TJP3) from Canis lupus familiaris (Dog).